The chain runs to 426 residues: Putative nickel insertion protein (426 aa).

It belongs to the LarC family.

In Nostoc sp. (strain PCC 7120 / SAG 25.82 / UTEX 2576), this protein is Putative nickel insertion protein.